Consider the following 483-residue polypeptide: Glycogen synthase kinase-3 alpha (483 aa).

Residues 1–15 (MSGGGPSGGGPGGSG) are compositionally biased toward gly residues. The interval 1 to 96 (MSGGGPSGGG…PPPGVKLGRD (96 aa)) is disordered. Ser-2 carries the N-acetylserine modification. At Ser-2 the chain carries Phosphoserine. The residue at position 21 (Ser-21) is a Phosphoserine; by PKB/AKT1. Residues 25–82 (PGGGGGGGGGGPGGSASGPGGTGGGKASVGAMGGGVGASSSGGGPGGSGGGGSGGPGA) show a composition bias toward gly residues. Residues Ser-72, Ser-77, and Ser-97 each carry the phosphoserine modification. Residues 119 to 403 (YTDIKVIGNG…PLEACAHSFF (285 aa)) form the Protein kinase domain. ATP contacts are provided by residues 125–133 (IGNGSFGVV) and Lys-148. Asp-244 serves as the catalytic Proton acceptor. At Tyr-279 the chain carries Phosphotyrosine. A disordered region spans residues 449 to 483 (AGTTTLTPSSQALTETPTSSDWQSTDATPTLTNSS).

The protein belongs to the protein kinase superfamily. CMGC Ser/Thr protein kinase family. GSK-3 subfamily. In terms of assembly, monomer. Interacts with ARRB2. Interacts with AXIN1 and CTNNB1/beta-catenin. Interacts with CTNND2. Interacts with LMBR1L. Interacts with DDX3X. Interacts with TNFRSF10B. Interacts with RICTOR; the interaction results in phosphorylation of RICTOR at 'Thr-1695' by GSK3A which facilitates FBXW7-mediated ubiquitination and subsequent degradation of RICTOR. As to quaternary structure, (Microbial infection) Interacts with M.tuberculosis PtpA. Phosphorylated by AKT1 at Ser-21: upon insulin-mediated signaling, the activated PKB/AKT1 protein kinase phosphorylates and deactivates GSK3A, resulting in the dephosphorylation and activation of GYS1. Activated by phosphorylation at Tyr-279. In terms of processing, (Microbial infection) Dephosphorylated at Tyr-279 by M.tuberculosis PtpA, which leads to prevention of apoptosis during early stages of microbial infection.

It carries out the reaction L-seryl-[tau protein] + ATP = O-phospho-L-seryl-[tau protein] + ADP + H(+). The catalysed reaction is L-threonyl-[tau protein] + ATP = O-phospho-L-threonyl-[tau protein] + ADP + H(+). The enzyme catalyses L-seryl-[protein] + ATP = O-phospho-L-seryl-[protein] + ADP + H(+). It catalyses the reaction L-threonyl-[protein] + ATP = O-phospho-L-threonyl-[protein] + ADP + H(+). Activated by phosphorylation at Tyr-279. In response to insulin, inhibited by phosphorylation at Ser-21 by PKB/AKT1; phosphorylation at this site causes a conformational change, preventing access of substrates to the active site. Inhibited by lithium. Constitutively active protein kinase that acts as a negative regulator in the hormonal control of glucose homeostasis, Wnt signaling and regulation of transcription factors and microtubules, by phosphorylating and inactivating glycogen synthase (GYS1 or GYS2), CTNNB1/beta-catenin, APC and AXIN1. Requires primed phosphorylation of the majority of its substrates. Contributes to insulin regulation of glycogen synthesis by phosphorylating and inhibiting GYS1 activity and hence glycogen synthesis. Regulates glycogen metabolism in liver, but not in muscle. May also mediate the development of insulin resistance by regulating activation of transcription factors. In Wnt signaling, regulates the level and transcriptional activity of nuclear CTNNB1/beta-catenin. Facilitates amyloid precursor protein (APP) processing and the generation of APP-derived amyloid plaques found in Alzheimer disease. May be involved in the regulation of replication in pancreatic beta-cells. Is necessary for the establishment of neuronal polarity and axon outgrowth. Through phosphorylation of the anti-apoptotic protein MCL1, may control cell apoptosis in response to growth factors deprivation. Acts as a regulator of autophagy by mediating phosphorylation of KAT5/TIP60 under starvation conditions which activates KAT5/TIP60 acetyltransferase activity and promotes acetylation of key autophagy regulators, such as ULK1 and RUBCNL/Pacer. Negatively regulates extrinsic apoptotic signaling pathway via death domain receptors. Promotes the formation of an anti-apoptotic complex, made of DDX3X, BRIC2 and GSK3B, at death receptors, including TNFRSF10B. The anti-apoptotic function is most effective with weak apoptotic signals and can be overcome by stronger stimulation. Phosphorylates mTORC2 complex component RICTOR at 'Thr-1695' which facilitates FBXW7-mediated ubiquitination and subsequent degradation of RICTOR. This chain is Glycogen synthase kinase-3 alpha (GSK3A), found in Homo sapiens (Human).